The primary structure comprises 559 residues: Formate--tetrahydrofolate ligase (559 aa).

68 to 75 is a binding site for ATP; sequence TPAGEGKS.

Belongs to the formate--tetrahydrofolate ligase family.

It catalyses the reaction (6S)-5,6,7,8-tetrahydrofolate + formate + ATP = (6R)-10-formyltetrahydrofolate + ADP + phosphate. It participates in one-carbon metabolism; tetrahydrofolate interconversion. This chain is Formate--tetrahydrofolate ligase, found in Clostridium tetani (strain Massachusetts / E88).